We begin with the raw amino-acid sequence, 530 residues long: UDP-glucuronosyltransferase 2B17 (530 aa).

The first 23 residues, 1-23, serve as a signal peptide directing secretion; it reads MSLKWMSVFLLMQLSCYFSSGSC. N-linked (GlcNAc...) asparagine glycosylation is present at Asn-65. N6-succinyllysine is present on Lys-136. Residues Asn-316 and Asn-483 are each glycosylated (N-linked (GlcNAc...) asparagine). A helical transmembrane segment spans residues 495–515; it reads IAFLLACVATMIFMITKCCLF.

This sequence belongs to the UDP-glycosyltransferase family. In terms of tissue distribution, expressed in various tissues including the liver, kidney, testis, uterus, placenta, mammary gland, adrenal gland, skin and prostate.

Its subcellular location is the endoplasmic reticulum membrane. The catalysed reaction is glucuronate acceptor + UDP-alpha-D-glucuronate = acceptor beta-D-glucuronoside + UDP + H(+). It catalyses the reaction 17alpha-estradiol + UDP-alpha-D-glucuronate = 17alpha-estradiol 3-O-(beta-D-glucuronate) + UDP + H(+). The enzyme catalyses 17alpha-estradiol + UDP-alpha-D-glucuronate = 17alpha-estradiol 17-O-(beta-D-glucuronate) + UDP + H(+). It carries out the reaction 17beta-estradiol + UDP-alpha-D-glucuronate = 17beta-estradiol 17-O-(beta-D-glucuronate) + UDP + H(+). The catalysed reaction is 17beta-hydroxy-5alpha-androstan-3-one + UDP-alpha-D-glucuronate = 5alpha-dihydrotestosterone 17-O-(beta-D-glucuronate) + UDP + H(+). It catalyses the reaction testosterone + UDP-alpha-D-glucuronate = testosterone 17-O-(beta-D-glucuronate) + UDP + H(+). Its function is as follows. UDP-glucuronosyltransferase (UGT) that catalyzes phase II biotransformation reactions in which lipophilic substrates are conjugated with glucuronic acid to increase the metabolite's water solubility, thereby facilitating excretion into either the urine or bile. Catalyzes the glucuronidation of endogenous steroid hormones such as androgens (epitestosterone, androsterone) and estrogens (estradiol, epiestradiol). This is UDP-glucuronosyltransferase 2B17 from Homo sapiens (Human).